The chain runs to 481 residues: Halobacterial transducer protein 9 (481 aa).

The region spanning 10-81 is the PAS domain; it reads SPFTVPLLLN…NKVADTPIDA (72 aa). A Methyl-accepting transducer domain is found at 208 to 444; sequence DVERLEAASQ…EIAAMVDETA (237 aa).

Belongs to the methyl-accepting chemotaxis (MCP) protein family.

The protein resides in the cytoplasm. Potentially involved in chemo- or phototactic signal transduction. The polypeptide is Halobacterial transducer protein 9 (htr9) (Halobacterium salinarum (strain ATCC 700922 / JCM 11081 / NRC-1) (Halobacterium halobium)).